The primary structure comprises 268 residues: Esterase PIR7B (268 aa).

S86 acts as the Acyl-ester intermediate in catalysis. Residues D218 and H246 each act as charge relay system in the active site.

It belongs to the AB hydrolase superfamily.

In terms of biological role, exhibits esterase activity towards naphthol AS-acetate in vitro. The protein is Esterase PIR7B (PIR7B) of Oryza sativa subsp. japonica (Rice).